A 198-amino-acid polypeptide reads, in one-letter code: Protein UNCMA_24250 (198 aa).

The 190-residue stretch at 5 to 194 (EDGTLAVKTA…ETEPGGPVIE (190 aa)) folds into the AMMECR1 domain.

The chain is Protein UNCMA_24250 from Methanocella arvoryzae (strain DSM 22066 / NBRC 105507 / MRE50).